A 385-amino-acid chain; its full sequence is Iron uptake system component EfeM (385 aa).

An N-terminal signal peptide occupies residues 1–22 (MNFTKIAVSAGCILALCAGCGA).

Belongs to the EfeM/EfeO family. Component of the iron transporter efeUOB/M complex composed of EfeU, EfeM and EfeB; EfeU is essential for the complex formation.

Its subcellular location is the cell membrane. It localises to the membrane raft. Functionally, part of the iron transporter system efeUOB/M involved in iron import. Specifically binds Fe(3+), which is produced by EfeB-mediated oxidation of Fe(2+), and delivers it to the cell membrane permease EfeU. In Bacillus subtilis (strain 168), this protein is Iron uptake system component EfeM.